We begin with the raw amino-acid sequence, 373 residues long: MSDNSKTRVVVGMSGGVDSSVTALLLKEQGYDVIGIFMKNWDDTDENGVCTATEDYKDVVAVADQIGIPYYSVNFEKEYWDRVFEYFLAEYRAGRTPNPDVMCNKEIKFKAFLDYAITLGADYVATGHYARVVRDEDGTVHMLRGVDNGKDQTYFLSQLSQEQLQKTMFPLGHLEKPEVRKLAEEAGLSTAKKKDSTGICFIGEKNFKNFLSNYLPAQPGRMMTVDGRDMGEHAGLMYYTIGQRGGLGIGGQHGGDNAPWFVVGKALSKNILYVGQGFYHDSLMSTSLEASQVHFTCDMPEEFTLECTAKFRYRQPDSKVTVHVKGDKAEVIFAEPQRAITPGQAVVFYDGEECLGGGLIDNAYRDGQVCQYI.

Residues 12–19 (GMSGGVDS) and Met-38 each bind ATP. An interaction with target base in tRNA region spans residues 98 to 100 (NPD). The Nucleophile role is filled by Cys-103. Cys-103 and Cys-200 are disulfide-bonded. Gly-127 serves as a coordination point for ATP. The segment at 150 to 152 (KDQ) is interaction with tRNA. The active-site Cysteine persulfide intermediate is the Cys-200. The segment at 312-313 (RY) is interaction with tRNA.

Belongs to the MnmA/TRMU family.

It is found in the cytoplasm. It carries out the reaction S-sulfanyl-L-cysteinyl-[protein] + uridine(34) in tRNA + AH2 + ATP = 2-thiouridine(34) in tRNA + L-cysteinyl-[protein] + A + AMP + diphosphate + H(+). Catalyzes the 2-thiolation of uridine at the wobble position (U34) of tRNA, leading to the formation of s(2)U34. This is tRNA-specific 2-thiouridylase MnmA from Streptococcus pneumoniae (strain JJA).